The primary structure comprises 62 residues: Large ribosomal subunit protein bL28 (62 aa).

The protein belongs to the bacterial ribosomal protein bL28 family.

In Thermoanaerobacter pseudethanolicus (strain ATCC 33223 / 39E) (Clostridium thermohydrosulfuricum), this protein is Large ribosomal subunit protein bL28.